A 343-amino-acid polypeptide reads, in one-letter code: Anthranilate phosphoribosyltransferase (343 aa).

5-phospho-alpha-D-ribose 1-diphosphate is bound by residues G84, 87–88 (GD), T92, 94–97 (NIST), 112–120 (KHGNRGVSS), and S124. Anthranilate is bound at residue G84. Position 96 (S96) interacts with Mg(2+). Anthranilate is bound at residue N115. R170 is an anthranilate binding site. Mg(2+)-binding residues include D229 and E230.

Belongs to the anthranilate phosphoribosyltransferase family. Homodimer. Mg(2+) serves as cofactor.

It carries out the reaction N-(5-phospho-beta-D-ribosyl)anthranilate + diphosphate = 5-phospho-alpha-D-ribose 1-diphosphate + anthranilate. The protein operates within amino-acid biosynthesis; L-tryptophan biosynthesis; L-tryptophan from chorismate: step 2/5. Functionally, catalyzes the transfer of the phosphoribosyl group of 5-phosphorylribose-1-pyrophosphate (PRPP) to anthranilate to yield N-(5'-phosphoribosyl)-anthranilate (PRA). In Burkholderia ambifaria (strain ATCC BAA-244 / DSM 16087 / CCUG 44356 / LMG 19182 / AMMD) (Burkholderia cepacia (strain AMMD)), this protein is Anthranilate phosphoribosyltransferase.